The following is a 264-amino-acid chain: Pimeloyl-[acyl-carrier protein] methyl ester esterase (264 aa).

The 222-residue stretch at 23-244 (LVMLHGWGVN…MLAKASHAPF (222 aa)) folds into the AB hydrolase-1 domain. Residues Trp29, 87–88 (SL), and 150–154 (FLAIQ) each bind substrate. Catalysis depends on Ser87, which acts as the Nucleophile. Catalysis depends on residues Asp214 and His241. His241 contacts substrate.

Belongs to the AB hydrolase superfamily. Carboxylesterase BioH family. In terms of assembly, monomer.

It is found in the cytoplasm. It catalyses the reaction 6-carboxyhexanoyl-[ACP] methyl ester + H2O = 6-carboxyhexanoyl-[ACP] + methanol + H(+). The protein operates within cofactor biosynthesis; biotin biosynthesis. Functionally, the physiological role of BioH is to remove the methyl group introduced by BioC when the pimeloyl moiety is complete. It allows to synthesize pimeloyl-ACP via the fatty acid synthetic pathway through the hydrolysis of the ester bonds of pimeloyl-ACP esters. This is Pimeloyl-[acyl-carrier protein] methyl ester esterase from Shewanella sp. (strain MR-7).